Here is a 93-residue protein sequence, read N- to C-terminus: Acylphosphatase (93 aa).

One can recognise an Acylphosphatase-like domain in the interval 6-93; sequence RLVAWVRGQV…RGGYEGFAIR (88 aa). Active-site residues include arginine 21 and asparagine 40.

It belongs to the acylphosphatase family.

The catalysed reaction is an acyl phosphate + H2O = a carboxylate + phosphate + H(+). The sequence is that of Acylphosphatase (acyP) from Streptomyces coelicolor (strain ATCC BAA-471 / A3(2) / M145).